A 190-amino-acid polypeptide reads, in one-letter code: Cancer-related nucleoside-triphosphatase homolog (190 aa).

A2 is subject to N-acetylalanine. ATP-binding positions include 9–16 (GPPGVGKT) and 109–116 (ICVIDEVG). At K165 the chain carries N6-acetyllysine.

The protein belongs to the THEP1 NTPase family. Monomer.

It catalyses the reaction a ribonucleoside 5'-triphosphate + H2O = a ribonucleoside 5'-diphosphate + phosphate + H(+). It carries out the reaction 5-methyl-UTP + H2O = 5-methyl-UDP + phosphate + H(+). The catalysed reaction is CTP + H2O = CDP + phosphate + H(+). The enzyme catalyses ATP + H2O = ADP + phosphate + H(+). It catalyses the reaction GTP + H2O = GDP + phosphate + H(+). Functionally, has nucleotide phosphatase activity towards ATP, GTP, CTP, TTP and UTP. Hydrolyzes nucleoside diphosphates with lower efficiency. The polypeptide is Cancer-related nucleoside-triphosphatase homolog (NTPCR) (Bos taurus (Bovine)).